The chain runs to 268 residues: MMQRCLRLPKLLALRRDLHLAQVERQAVVTEAPEAEPQDAFERQYFKERIEISPFQRVFLAAGSSIAALLDPRRHDMIACLGETTGEDALWTILDSMQASEEGQRIMADKPRIHTSTIDFKYLETLPPDTFGAAYVKFLKDNQVTPDSRMAVRFLEEPKLAYLMTRYRECHDLIHTVLDMPTNMLGEVSVKWVEALNTGLPMCYGGAVFGAVRLRPKQRRAYLKHYLPWALENGKRTKPLMPVYWEKRWEQNIHDLRSELGITVLNKA.

Zn(2+)-binding residues include His171, Asp172, His175, and Glu187.

The protein belongs to the COQ4 family. Component of a multi-subunit COQ enzyme complex. It depends on Zn(2+) as a cofactor.

It is found in the mitochondrion inner membrane. The catalysed reaction is a 4-hydroxy-3-methoxy-5-(all-trans-polyprenyl)benzoate + H(+) = a 2-methoxy-6-(all-trans-polyprenyl)phenol + CO2. The protein operates within cofactor biosynthesis; ubiquinone biosynthesis. Functionally, lyase that catalyzes the C1-decarboxylation of 4-hydroxy-3-methoxy-5-(all-trans-polyprenyl)benzoic acid into 2-methoxy-6-(all-trans-polyprenyl)phenol during ubiquinone biosynthesis. This chain is Ubiquinone biosynthesis protein COQ4 homolog, mitochondrial, found in Drosophila erecta (Fruit fly).